A 151-amino-acid chain; its full sequence is Group 10 secretory phospholipase A2 (151 aa).

An N-terminal signal peptide occupies residues 1–17; it reads MLLLLLLLLLGPGPGFS. Residues 18–28 constitute a propeptide that is removed on maturation; sequence EATRRSHVYKR. 8 disulfide bridges follow: Cys39/Cys97, Cys53/Cys143, Cys55/Cys71, Cys70/Cys125, Cys76/Cys150, Cys77/Cys118, Cys86/Cys111, and Cys104/Cys116. 3 residues coordinate Ca(2+): Tyr54, Gly56, and Gly58. His74 is an active-site residue. Asp75 is a binding site for Ca(2+). Asp119 is an active-site residue.

The protein belongs to the phospholipase A2 family. Interacts with PLA2R1; this interaction mediates PLA2G10 clearance and inactivation. It depends on Ca(2+) as a cofactor. As to expression, expressed at high levels in testis and the gastrointestinal tract including stomach and colon. Expressed at lower levels in other tissues including small intestine, uterus, oviduct, lung, thymus, spleen and brain. Expressed in Paneth-like secretory epithelial cells of the colon. Expressed in gastric and ileac epithelial cells and in glandular epithelium of intestinal mucosa (at protein level). Expressed in late spermatogenic cells, spermatocytes and spermatids, but not spermatogonia in seminiferous tubules (at protein level). Expressed mainly in the apical side of endometrial epithelial cells and in the interstitium beneath the epithelium of uterus (at protein level). Expressed in resident spleen macrophages (at protein level). Expressed at outermost layer of hair follicles. Expressed in dorsal root ganglia in both NEFH-positive A-fibers and PRPH-positive C-fibers (at protein level).

It is found in the secreted. It localises to the lysosome. The protein localises to the cytoplasmic vesicle. Its subcellular location is the secretory vesicle. The protein resides in the acrosome. It carries out the reaction a 1,2-diacyl-sn-glycero-3-phosphocholine + H2O = a 1-acyl-sn-glycero-3-phosphocholine + a fatty acid + H(+). It catalyses the reaction 1-hexadecanoyl-2-(9Z-octadecenoyl)-sn-glycero-3-phosphocholine + H2O = 1-hexadecanoyl-sn-glycero-3-phosphocholine + (9Z)-octadecenoate + H(+). The enzyme catalyses 1-octadecanoyl-2-(5Z,8Z,11Z,14Z-eicosatetraenoyl)-sn-glycero-3-phosphocholine + H2O = 1-octadecanoyl-sn-glycero-3-phosphocholine + (5Z,8Z,11Z,14Z)-eicosatetraenoate + H(+). The catalysed reaction is 1,2-dihexadecanoyl-sn-glycero-3-phosphocholine + H2O = 1-hexadecanoyl-sn-glycero-3-phosphocholine + hexadecanoate + H(+). It carries out the reaction 1-hexadecanoyl-2-(9Z-octadecenoyl)-sn-glycero-3-phosphoglycerol + H2O = 1-hexadecanoyl-sn-glycero-3-phosphoglycerol + (9Z)-octadecenoate + H(+). It catalyses the reaction 1,2-dihexadecanoyl-sn-glycero-3-phospho-(1'-sn-glycerol) + H2O = 1-hexadecanoyl-sn-glycero-3-phospho-(1'-sn-glycerol) + hexadecanoate + H(+). The enzyme catalyses 1-hexadecanoyl-2-(9Z-octadecenoyl)-sn-glycero-3-phospho-L-serine + H2O = 1-hexadecanoyl-sn-glycero-3-phospho-L-serine + (9Z)-octadecenoate + H(+). The catalysed reaction is 1-hexadecanoyl-2-(9Z,12Z-octadecadienoyl)-sn-glycero-3-phosphoethanolamine + H2O = 1-hexadecanoyl-sn-glycero-3-phosphoethanolamine + (9Z,12Z)-octadecadienoate + H(+). It carries out the reaction 1-hexadecanoyl-2-(9Z-octadecenoyl)-sn-glycero-3-phosphate + H2O = 1-hexadecanoyl-sn-glycero-3-phosphate + (9Z)-octadecenoate + H(+). It catalyses the reaction 1-O-hexadecyl-2-acetyl-sn-glycero-3-phosphocholine + H2O = 1-O-hexadecyl-sn-glycero-3-phosphocholine + acetate + H(+). Functionally, secretory calcium-dependent phospholipase A2 that primarily targets extracellular phospholipids. Hydrolyzes the ester bond of the fatty acyl group attached at sn-2 position of phospholipids with preference for phosphatidylcholines and phosphatidylglycerols over phosphatidylethanolamines. Preferentially releases sn-2 omega-6 and omega-3 polyunsaturated fatty acyl (PUFA) chains over saturated fatty acyls. Contributes to phospholipid remodeling of very low-density lipoprotein (VLDL), low-density lipoprotein (LDL) and high-density lipoprotein (HDL) particles. Hydrolyzes LDL phospholipids releasing unsaturated fatty acids that regulate macrophage differentiation toward foam cells. Efficiently hydrolyzes and inactivates PAF, a potent lipid mediator present in oxidized LDL. May act in an autocrine and paracrine manner. Secreted by lung epithelium, targets membrane phospholipids of infiltrating eosinophils, releasing arachidonate and boosting eicosanoid and cysteinyl leukotriene synthesis involved in airway inflammatory response. Secreted by gut epithelium, hydrolyzes dietary and biliary phosphatidylcholines in the gastrointestinal lumen, thereby regulating adipogenesis and body weight. Plays a stem cell regulator role in colon epithelium. Within intracellular compartment, mediates Paneth-like cell differentiation and its stem cell supporting functions by inhibiting Wnt signaling pathway in intestinal stem cell (ISC). Secreted in the intestinal lumen upon inflammation, acts in an autocrine way and promotes prostaglandin E2 synthesis that stimulates the Wnt signaling pathway in ISCs and tissue regeneration. May participate in hair follicle morphogenesis by regulating phosphatidylethanolamines metabolism at the outermost epithelial layer and facilitating melanin synthesis. By generating lysophosphatidylcholines (LPCs) at sperm acrosome controls sperm cell capacitation, acrosome reaction and overall fertility. May promote neurite outgrowth in neuron fibers involved in nociception. Contributes to lipid remodeling of cellular membranes and generation of lipid mediators involved in pathogen clearance. Cleaves sn-2 fatty acyl chains of phosphatidylglycerols and phosphatidylethanolamines, which are major components of membrane phospholipids in bacteria. Displays bactericidal activity against Gram-positive bacteria by directly hydrolyzing phospholipids of the bacterial membrane. In pulmonary epithelium, may contribute to host defense response against adenoviral infection. Prevents adenovirus entry into host cells by hydrolyzing host cell plasma membrane, releasing C16:0 LPCs that inhibit virus-mediated membrane fusion and viral infection. Likely prevents adenoviral entry into the endosomes of host cells. May play a role in maturation and activation of innate immune cells including macrophages, group 2 innate lymphoid cells and mast cells. This chain is Group 10 secretory phospholipase A2 (Pla2g10), found in Mus musculus (Mouse).